The primary structure comprises 498 residues: U4/U6 small nuclear ribonucleoprotein Prp31 (498 aa).

Coiled coils occupy residues 84-119 (EAAPEYKVIVDANNLTVEIENELNIIHKFIRDKYSK) and 180-214 (DEELERIEEACDMALELNQSKHRIYEYVESRMSFI). Positions 214 to 332 (IAPNLSIIVG…IERKFDKWQE (119 aa)) constitute a Nop domain. Residues 333–356 (PPPVKQVKPLPAPLDGQRKKRGGR) form a disordered region. Residues 350–363 (RKKRGGRRYRKMKE) carry the Nuclear localization signal (NLS) motif.

Belongs to the PRP31 family. As to quaternary structure, identified in the spliceosome B complex. Component of the U4/U6-U5 tri-snRNP complex. Component of some MLL1/MLL complex.

It is found in the nucleus. The protein resides in the nucleus speckle. It localises to the cajal body. Functionally, involved in pre-mRNA splicing as component of the spliceosome. Required for the assembly of the U4/U5/U6 tri-snRNP complex, one of the building blocks of the spliceosome. This Xenopus tropicalis (Western clawed frog) protein is U4/U6 small nuclear ribonucleoprotein Prp31 (prpf31).